The following is a 184-amino-acid chain: Peptidyl-tRNA hydrolase (184 aa).

Tyrosine 14 is a tRNA binding site. The active-site Proton acceptor is histidine 19. The tRNA site is built by phenylalanine 64, asparagine 66, and asparagine 112.

The protein belongs to the PTH family. In terms of assembly, monomer.

Its subcellular location is the cytoplasm. The catalysed reaction is an N-acyl-L-alpha-aminoacyl-tRNA + H2O = an N-acyl-L-amino acid + a tRNA + H(+). Functionally, hydrolyzes ribosome-free peptidyl-tRNAs (with 1 or more amino acids incorporated), which drop off the ribosome during protein synthesis, or as a result of ribosome stalling. In terms of biological role, catalyzes the release of premature peptidyl moieties from peptidyl-tRNA molecules trapped in stalled 50S ribosomal subunits, and thus maintains levels of free tRNAs and 50S ribosomes. The polypeptide is Peptidyl-tRNA hydrolase (Listeria welshimeri serovar 6b (strain ATCC 35897 / DSM 20650 / CCUG 15529 / CIP 8149 / NCTC 11857 / SLCC 5334 / V8)).